The primary structure comprises 201 residues: 3-isopropylmalate dehydratase small subunit (201 aa).

The protein belongs to the LeuD family. LeuD type 1 subfamily. Heterodimer of LeuC and LeuD.

The enzyme catalyses (2R,3S)-3-isopropylmalate = (2S)-2-isopropylmalate. The protein operates within amino-acid biosynthesis; L-leucine biosynthesis; L-leucine from 3-methyl-2-oxobutanoate: step 2/4. In terms of biological role, catalyzes the isomerization between 2-isopropylmalate and 3-isopropylmalate, via the formation of 2-isopropylmaleate. The chain is 3-isopropylmalate dehydratase small subunit from Kineococcus radiotolerans (strain ATCC BAA-149 / DSM 14245 / SRS30216).